The chain runs to 1253 residues: Cytoplasmic FMR1-interacting protein 1 (1253 aa).

Residue Ser583 is modified to Phosphoserine. The interval 724–732 is EIF4E-binding; the sequence is DKRLRSECK. At Thr1234 the chain carries Phosphothreonine.

The protein belongs to the CYFIP family. In terms of assembly, component of the WAVE1 complex composed of ABI2, CYFIP1 or CYFIP2, BRK1, NCKAP1 and WASF1/WAVE1. Within the complex, a heterodimer containing NCKAP1 and CYFIP1 interacts with a heterotrimer formed by WAVE1, ABI2 and BRK1. Component of the CYFIP1-EIF4E-FMR1 complex which is composed of CYFIP, EIF4E and FMR1. Interacts with FMR1 but does not bind to related proteins FXR1 or FXR2. Interaction with EIF4E stimulates FMR1 binding. Component of the WAVE2 complex composed of ABI1, CYFIP1/SRA1, NCKAP1/NAP1 (NCKAP1L/HEM1 in hematopoietic cells) and WASF2/WAVE2. Interacts with the active GTP-bound form of RAC1. Interacts through its C-terminus with the C-terminus of DPYSL2/CRMP2 which is necessary for DPYSL2-induced axon outgrowth. Interacts with NYAP1, NYAP2 and MYO16. Interacts with TMEM108 (via N-terminus); the interaction associates TMEM108 with the WAVE1 complex. Highly expressed in embryonic and adult developing nervous system.

It localises to the cytoplasm. It is found in the perinuclear region. The protein localises to the cell projection. The protein resides in the lamellipodium. Its subcellular location is the ruffle. It localises to the synapse. It is found in the synaptosome. Component of the CYFIP1-EIF4E-FMR1 complex which binds to the mRNA cap and mediates translational repression. In the CYFIP1-EIF4E-FMR1 complex this subunit is an adapter between EIF4E and FMR1. Promotes the translation repression activity of FMR1 in brain probably by mediating its association with EIF4E and mRNA. Regulates formation of membrane ruffles and lamellipodia. Plays a role in axon outgrowth. Binds to F-actin but not to RNA. Part of the WAVE complex that regulates actin filament reorganization via its interaction with the Arp2/3 complex. Actin remodeling activity is regulated by RAC1. Regulator of epithelial morphogenesis. May act as an invasion suppressor in cancers. As component of the WAVE1 complex, required for BDNF-NTRK2 endocytic trafficking and signaling from early endosomes. The polypeptide is Cytoplasmic FMR1-interacting protein 1 (Mus musculus (Mouse)).